A 609-amino-acid polypeptide reads, in one-letter code: Elongation factor 4 (609 aa).

The region spanning 11-193 (ERIRNFSIIA…QIVEKIPAPS (183 aa)) is the tr-type G domain. GTP is bound by residues 23 to 28 (DHGKST) and 140 to 143 (NKID).

The protein belongs to the TRAFAC class translation factor GTPase superfamily. Classic translation factor GTPase family. LepA subfamily.

It is found in the cell membrane. The catalysed reaction is GTP + H2O = GDP + phosphate + H(+). Functionally, required for accurate and efficient protein synthesis under certain stress conditions. May act as a fidelity factor of the translation reaction, by catalyzing a one-codon backward translocation of tRNAs on improperly translocated ribosomes. Back-translocation proceeds from a post-translocation (POST) complex to a pre-translocation (PRE) complex, thus giving elongation factor G a second chance to translocate the tRNAs correctly. Binds to ribosomes in a GTP-dependent manner. The polypeptide is Elongation factor 4 (Geobacillus thermodenitrificans (strain NG80-2)).